We begin with the raw amino-acid sequence, 194 residues long: Endoribonuclease YbeY (194 aa).

Residues histidine 127, histidine 131, and aspartate 137 each contribute to the Zn(2+) site. The disordered stretch occupies residues 162–194 (PLSNDEDSAPEQDDSFDDDASDSSGGIMSGGVS). A compositionally biased stretch (acidic residues) spans 165–182 (NDEDSAPEQDDSFDDDAS).

Belongs to the endoribonuclease YbeY family. The cofactor is Zn(2+).

The protein localises to the cytoplasm. Its function is as follows. Single strand-specific metallo-endoribonuclease involved in late-stage 70S ribosome quality control and in maturation of the 3' terminus of the 16S rRNA. The chain is Endoribonuclease YbeY from Rhodopirellula baltica (strain DSM 10527 / NCIMB 13988 / SH1).